Consider the following 134-residue polypeptide: Large ribosomal subunit protein eL32 (134 aa).

Belongs to the eukaryotic ribosomal protein eL32 family.

In Picrophilus torridus (strain ATCC 700027 / DSM 9790 / JCM 10055 / NBRC 100828 / KAW 2/3), this protein is Large ribosomal subunit protein eL32 (rpl32e).